The sequence spans 284 residues: Tryptophan 2,3-dioxygenase (284 aa).

Residues 53–57 (FIVQH), Tyr-115, and Arg-119 each bind substrate. Residue His-242 coordinates heme. Residue Thr-256 coordinates substrate.

The protein belongs to the tryptophan 2,3-dioxygenase family. In terms of assembly, homotetramer. It depends on heme as a cofactor.

It catalyses the reaction L-tryptophan + O2 = N-formyl-L-kynurenine. Its pathway is amino-acid degradation; L-tryptophan degradation via kynurenine pathway; L-kynurenine from L-tryptophan: step 1/2. Heme-dependent dioxygenase that catalyzes the oxidative cleavage of the L-tryptophan (L-Trp) pyrrole ring and converts L-tryptophan to N-formyl-L-kynurenine. Catalyzes the oxidative cleavage of the indole moiety. The chain is Tryptophan 2,3-dioxygenase from Bordetella parapertussis (strain 12822 / ATCC BAA-587 / NCTC 13253).